Here is a 208-residue protein sequence, read N- to C-terminus: Guanylate kinase (208 aa).

Residues 4-185 form the Guanylate kinase-like domain; that stretch reads GNLYILSAPS…ALADLVHILR (182 aa). 11 to 18 serves as a coordination point for ATP; that stretch reads APSGAGKS.

The protein belongs to the guanylate kinase family.

It is found in the cytoplasm. The enzyme catalyses GMP + ATP = GDP + ADP. Essential for recycling GMP and indirectly, cGMP. The polypeptide is Guanylate kinase (Mannheimia succiniciproducens (strain KCTC 0769BP / MBEL55E)).